Consider the following 793-residue polypeptide: Transcription factor castor (793 aa).

Polar residues predominate over residues 44–53 (NEDISSSTSV). 3 disordered regions span residues 44-101 (NEDI…NLIA), 199-259 (VTST…HTNA), and 272-296 (LESTTDSLDSPSMYTPVKQPADSSY). Composition is skewed to low complexity over residues 54-68 (QQQQQQQQEQLQQPQ), 81-98 (SSQNTNCSSSRSCSPNSN), and 210-221 (ATPAPSAGATAG). Position 211 is a phosphothreonine (threonine 211). Serine 215 is modified (phosphoserine). Positions 233 to 242 (ESADDDEDDD) are enriched in acidic residues. A compositionally biased stretch (low complexity) spans 245–254 (LSSLTSCSSS). A compositionally biased stretch (polar residues) spans 273–284 (ESTTDSLDSPSM). The C2H2-type 1; atypical zinc-finger motif lies at 377–402 (FHCHEEPCQGKILSKKDDIIRHLKWH). 3 consecutive C2H2-type zinc fingers follow at residues 439 to 463 (YHCVYEHCPKVYVSTSDVQMHANFH), 498 to 522 (YHCCREGCTHTFKNKADMDKHKTYH), and 556 to 580 (IHCVREGCDYILHSSSQMISHKRKH). A disordered region spans residues 599–682 (EESSLDAMPQ…RLKVEDESSN (84 aa)). The span at 608–629 (QQQQQQQQQQPTSLSQSQSSSS) shows a compositional bias: low complexity. Positions 630–644 (VCGGSNTSTPLSSLS) are enriched in polar residues. The a.T hook DNA-binding region spans 650–662 (ARKRGRPPKKIQL).

In terms of tissue distribution, expressed in a specific subset of neuroblasts in the ventral nerve cord and the procephalic region in the embryo. Expressed in many, if not all, late delaminating NBs, and in early NBs, but only after they have undergone several rounds of ganglion mother cell-producing divisions.

It localises to the nucleus. In terms of biological role, transcription factor that specifies expression of key genes in developing central nervous system (CNS). Essential for many, if not all, late developing neuroblastoma (NB) sublineages. Binds to the 5'-[CG]C[CT][CT]AAAAA[AT]-3' DNA sequence, like hb, suggesting that cas and hb act as a late regulators in early and late CNS NB sublineage, respectively. Acts by repressing expression of nub/pdm-1 and pdm2/pdm-2 POU genes, and restrict their pattern of expression in appropriate cells. Required for a full expression of vvl/drifter and acj6/I-POU; it is however unknown whether it directly activates these genes. Controls engrailed (en) expression in the ventral nerve cord. This Drosophila melanogaster (Fruit fly) protein is Transcription factor castor (cas).